Consider the following 152-residue polypeptide: Prostaglandin E synthase (152 aa).

The Lumenal portion of the chain corresponds to 1–12; the sequence is MPAHSLAMSSPA. A helical transmembrane segment spans residues 13 to 41; the sequence is LPAFLLCSTLLVIKMYVVAIITGQVRLRK. Residue Arg-38 coordinates glutathione. Residues 42-60 lie on the Cytoplasmic side of the membrane; that stretch reads KAFANPEDALRHGGPQYCR. Residues 61 to 90 form a helical membrane-spanning segment; it reads SDPDVERCLRAHRNDMETIYPFLFLGFVYS. 73–77 provides a ligand contact to glutathione; it reads RNDME. Residues 91–95 lie on the Lumenal side of the membrane; it reads FLGPN. A helical transmembrane segment spans residues 96–119; it reads PFVAWMHFLVFLLGRVVHTVAYLG. Glutathione-binding residues include His-113 and Tyr-117. At 120-123 the chain is on the cytoplasmic side; sequence KLRA. Residues 124–152 traverse the membrane as a helical segment; that stretch reads PIRSVTYTLAQLPCASMALQILWEAARHL. 126–130 is a glutathione binding site; that stretch reads RSVTY.

The protein belongs to the MAPEG family. In terms of assembly, homotrimer. It depends on glutathione as a cofactor.

It is found in the membrane. It localises to the cytoplasm. The protein resides in the perinuclear region. It carries out the reaction prostaglandin H2 = prostaglandin E2. It catalyses the reaction 2-glyceryl-prostaglandin H2 = 2-glyceryl-prostaglandin E2. The catalysed reaction is prostaglandin G2 = (15S)-15-hydroperoxy-prostaglandin E2. The enzyme catalyses 1-chloro-2,4-dinitrobenzene + glutathione = 2,4-dinitrophenyl-S-glutathione + chloride + H(+). It carries out the reaction (5S)-hydroperoxy-(6E,8Z,11Z,14Z)-eicosatetraenoate + 2 glutathione = (5S)-hydroxy-(6E,8Z,11Z,14Z)-eicosatetraenoate + glutathione disulfide + H2O. It participates in lipid metabolism; prostaglandin biosynthesis. Its function is as follows. Terminal enzyme of the cyclooxygenase (COX)-2-mediated prostaglandin E2 (PGE2) biosynthetic pathway. Catalyzes the glutathione-dependent oxidoreduction of prostaglandin endoperoxide H2 (PGH2) to prostaglandin E2 (PGE2) in response to inflammatory stimuli. Plays a key role in inflammation response, fever and pain. Also catalyzes the oxidoreduction of endocannabinoids into prostaglandin glycerol esters and PGG2 into 15-hydroperoxy-PGE2. In addition, displays low glutathione transferase and glutathione-dependent peroxidase activities, toward 1-chloro-2,4-dinitrobenzene and 5-hydroperoxyicosatetraenoic acid (5-HPETE), respectively. The polypeptide is Prostaglandin E synthase (PTGES) (Macaca fascicularis (Crab-eating macaque)).